Consider the following 335-residue polypeptide: Glycerol-3-phosphate dehydrogenase [NAD(P)+] (335 aa).

NADPH is bound by residues serine 10, phenylalanine 11, arginine 31, and lysine 105. Residues lysine 105, glycine 136, and serine 138 each contribute to the sn-glycerol 3-phosphate site. Alanine 140 contacts NADPH. 5 residues coordinate sn-glycerol 3-phosphate: lysine 191, aspartate 244, serine 254, arginine 255, and asparagine 256. Lysine 191 acts as the Proton acceptor in catalysis. Arginine 255 provides a ligand contact to NADPH. Residues valine 279 and glutamate 281 each coordinate NADPH.

The protein belongs to the NAD-dependent glycerol-3-phosphate dehydrogenase family.

The protein localises to the cytoplasm. The catalysed reaction is sn-glycerol 3-phosphate + NAD(+) = dihydroxyacetone phosphate + NADH + H(+). The enzyme catalyses sn-glycerol 3-phosphate + NADP(+) = dihydroxyacetone phosphate + NADPH + H(+). It participates in membrane lipid metabolism; glycerophospholipid metabolism. Functionally, catalyzes the reduction of the glycolytic intermediate dihydroxyacetone phosphate (DHAP) to sn-glycerol 3-phosphate (G3P), the key precursor for phospholipid synthesis. In Leptospira interrogans serogroup Icterohaemorrhagiae serovar copenhageni (strain Fiocruz L1-130), this protein is Glycerol-3-phosphate dehydrogenase [NAD(P)+].